A 256-amino-acid polypeptide reads, in one-letter code: Ribonuclease HII (256 aa).

The 185-residue stretch at 72-256 folds into the RNase H type-2 domain; that stretch reads QYVAGIDEVG…TFRPVPDYVN (185 aa). A divalent metal cation is bound by residues D78, E79, and D170.

Belongs to the RNase HII family. Requires Mn(2+) as cofactor. Mg(2+) is required as a cofactor.

Its subcellular location is the cytoplasm. It catalyses the reaction Endonucleolytic cleavage to 5'-phosphomonoester.. Endonuclease that specifically degrades the RNA of RNA-DNA hybrids. The protein is Ribonuclease HII of Limosilactobacillus fermentum (strain NBRC 3956 / LMG 18251) (Lactobacillus fermentum).